The primary structure comprises 180 residues: MKSLSKLVRTVDESQIIEFFQESVGEWCSQRRYYTLPDGETKEMMSMITIRFLEQGCDELQKLAQIHKLAESVFLICGAEVTWCSTDVLKNRSESEGSTLFGALGNILYRDRGFATSKPVTAQYNFPNPKTLCLRTEYNGSVFEEELKLIGSKYRTRQTIISRAGEQLMIGQYIEKRIVQ.

The protein belongs to the CpcS/CpeS biliprotein lyase family.

Functionally, covalently attaches a chromophore to Cys residue(s) of phycobiliproteins (Potential). In vitro does not act as a chromophore lyase for ApcA1, ApcA2, ApcB, ApcD, ApcF, CpcB or PecB, the lyase activity is therefore unsure. This is Putative phycocyanobilin lyase CpcS 2 (cpeS2) from Nostoc sp. (strain PCC 7120 / SAG 25.82 / UTEX 2576).